A 122-amino-acid chain; its full sequence is Ribosome-binding factor A (122 aa).

This sequence belongs to the RbfA family. Monomer. Binds 30S ribosomal subunits, but not 50S ribosomal subunits or 70S ribosomes.

The protein resides in the cytoplasm. Its function is as follows. One of several proteins that assist in the late maturation steps of the functional core of the 30S ribosomal subunit. Associates with free 30S ribosomal subunits (but not with 30S subunits that are part of 70S ribosomes or polysomes). Required for efficient processing of 16S rRNA. May interact with the 5'-terminal helix region of 16S rRNA. The polypeptide is Ribosome-binding factor A (Prosthecochloris aestuarii (strain DSM 271 / SK 413)).